The primary structure comprises 152 residues: Large ribosomal subunit protein uL13 (152 aa).

This sequence belongs to the universal ribosomal protein uL13 family. As to quaternary structure, part of the 50S ribosomal subunit.

In terms of biological role, this protein is one of the early assembly proteins of the 50S ribosomal subunit, although it is not seen to bind rRNA by itself. It is important during the early stages of 50S assembly. The sequence is that of Large ribosomal subunit protein uL13 from Borreliella afzelii (strain PKo) (Borrelia afzelii).